The following is a 141-amino-acid chain: Large ribosomal subunit protein uL11 (141 aa).

It belongs to the universal ribosomal protein uL11 family. As to quaternary structure, part of the ribosomal stalk of the 50S ribosomal subunit. Interacts with L10 and the large rRNA to form the base of the stalk. L10 forms an elongated spine to which L12 dimers bind in a sequential fashion forming a multimeric L10(L12)X complex. In terms of processing, one or more lysine residues are methylated.

Forms part of the ribosomal stalk which helps the ribosome interact with GTP-bound translation factors. This is Large ribosomal subunit protein uL11 from Fervidobacterium nodosum (strain ATCC 35602 / DSM 5306 / Rt17-B1).